A 272-amino-acid chain; its full sequence is N-acetylmuramoyl-L-alanine amidase CwlA (272 aa).

The N-acetylmuramoyl-L-alanine amidase domain occupies 24–142 (KAEYITIHNT…QDWNGKYCPH (119 aa)).

This sequence belongs to the N-acetylmuramoyl-L-alanine amidase 2 family.

It carries out the reaction Hydrolyzes the link between N-acetylmuramoyl residues and L-amino acid residues in certain cell-wall glycopeptides.. Functionally, autolysins are involved in some important biological processes such as cell separation, cell-wall turnover, competence for genetic transformation, formation of the flagella and sporulation. The chain is N-acetylmuramoyl-L-alanine amidase CwlA (cwlA) from Bacillus subtilis (strain 168).